A 349-amino-acid polypeptide reads, in one-letter code: UDP-N-acetylenolpyruvoylglucosamine reductase (349 aa).

Positions 26 to 197 (FDARARVAAR…VAVTFRLPKA (172 aa)) constitute an FAD-binding PCMH-type domain. Arginine 173 is a catalytic residue. Serine 249 serves as the catalytic Proton donor. Glutamate 345 is an active-site residue.

This sequence belongs to the MurB family. The cofactor is FAD.

Its subcellular location is the cytoplasm. It catalyses the reaction UDP-N-acetyl-alpha-D-muramate + NADP(+) = UDP-N-acetyl-3-O-(1-carboxyvinyl)-alpha-D-glucosamine + NADPH + H(+). It participates in cell wall biogenesis; peptidoglycan biosynthesis. Its function is as follows. Cell wall formation. The polypeptide is UDP-N-acetylenolpyruvoylglucosamine reductase (Burkholderia pseudomallei (strain K96243)).